The primary structure comprises 327 residues: tRNA N6-adenosine threonylcarbamoyltransferase (327 aa).

Fe cation is bound by residues His109 and His113. Substrate contacts are provided by residues 132 to 136 (MVSGG), Asp165, Gly178, Asp182, and Asn268. Fe cation is bound at residue Asp296.

This sequence belongs to the KAE1 / TsaD family. In terms of assembly, forms a hexamer composed of two TsaB, TsaD and TsaE trimers. It depends on Fe(2+) as a cofactor.

It is found in the cytoplasm. It carries out the reaction L-threonylcarbamoyladenylate + adenosine(37) in tRNA = N(6)-L-threonylcarbamoyladenosine(37) in tRNA + AMP + H(+). Required for the formation of a threonylcarbamoyl group on adenosine at position 37 (t(6)A37) in tRNAs that read codons beginning with adenine. Is involved in the transfer of the threonylcarbamoyl moiety of threonylcarbamoyl-AMP (TC-AMP) to the N6 group of A37, together with TsaE and TsaB. TsaD likely plays a direct catalytic role in this reaction. The sequence is that of tRNA N6-adenosine threonylcarbamoyltransferase from Thermotoga maritima (strain ATCC 43589 / DSM 3109 / JCM 10099 / NBRC 100826 / MSB8).